A 555-amino-acid polypeptide reads, in one-letter code: Inorganic phosphate transporter 1-11 (555 aa).

Topologically, residues 1-28 (MADADGGSNLAVLDALDSARTQMYHMKA) are cytoplasmic. Residues 29 to 49 (IVIAGMGFFTDAYDLFCISTV) form a helical membrane-spanning segment. The Extracellular portion of the chain corresponds to 50 to 77 (SKLLGRLYYQPDGSTDSKPGALSKTANN). A helical membrane pass occupies residues 78–98 (MVIGVALVGTLMGQLVFGYFG). At 99 to 105 (DKLGRKR) the chain is on the cytoplasmic side. A helical membrane pass occupies residues 106–126 (VYGVTLILMAACAIGSGLSFG). Residues 127–130 (SSRK) lie on the Extracellular side of the membrane. A helical transmembrane segment spans residues 131–151 (AVIGTLCFFRFWLGFGIGGDY). Topologically, residues 152-167 (PLSATIMSEYSNKKTR) are cytoplasmic. Residues 168–188 (GAFIAAVFAMQGVGIIFAGLV) traverse the membrane as a helical segment. The Extracellular segment spans residues 189–216 (SMIVSSIFLTYNKAPSYKGNHDLSRQMP). The chain crosses the membrane as a helical span at residues 217–237 (AADYVWRIVLMIGAFPALATF). At 238–298 (YWRMKMPETA…PLLSMEFARR (61 aa)) the chain is on the cytoplasmic side. Residues 299–319 (HGLHLIGTTTTWFLLDIAFYS) traverse the membrane as a helical segment. The Extracellular portion of the chain corresponds to 320–351 (QNLTQKDIFPAMGLISGAAEVNALTEMFQISK). A helical transmembrane segment spans residues 352 to 372 (ASFLVALLGTFPGYWVTVALI). Topologically, residues 373 to 377 (DKMGR) are cytoplasmic. The helical transmembrane segment at 378–398 (YMIQLIGFFMMSMFMLAMGIL) threads the bilayer. Over 399 to 408 (YDYLKTHHFL) the chain is Extracellular. The helical transmembrane segment at 409 to 436 (FGLLYALTFFFANFGPNSTTFVLPAELF) threads the bilayer. At 437-442 (PTRVRS) the chain is on the cytoplasmic side. A helical transmembrane segment spans residues 443 to 463 (TCHAISAAAGKAGAIVAAFGI). The Extracellular portion of the chain corresponds to 464–477 (QKLTYNSQVKSIKK). Residues 478–498 (ALIILSITNMLGFFFTFLVPE) form a helical membrane-spanning segment. At 499 to 555 (TMGRSLEEISGEDGNTGAGGGGAPAAANAGVGVSASDVSRDEKFPASSTEWQTSMHA) the chain is on the cytoplasmic side. Positions 506-555 (EISGEDGNTGAGGGGAPAAANAGVGVSASDVSRDEKFPASSTEWQTSMHA) are disordered. The segment covering 512–521 (GNTGAGGGGA) has biased composition (gly residues). Residues 522–535 (PAAANAGVGVSASD) are compositionally biased toward low complexity. Residues 544-555 (ASSTEWQTSMHA) are compositionally biased toward polar residues.

This sequence belongs to the major facilitator superfamily. Phosphate:H(+) symporter (TC 2.A.1.9) family.

Its subcellular location is the membrane. Symbiosis-specific regulated inorganic phosphate (Pi) transporter. Probably involved in symbiosis-mediated Pi uptake in roots colonized by myccorhizal fungi. This Oryza sativa subsp. japonica (Rice) protein is Inorganic phosphate transporter 1-11 (PHT1-11).